The primary structure comprises 312 residues: tRNA dimethylallyltransferase (312 aa).

13 to 20 (GPTAVGKT) is an ATP binding site. Residue 15 to 20 (TAVGKT) coordinates substrate. 2 interaction with substrate tRNA regions span residues 38–41 (DSVQ) and 163–167 (QRVVR).

It belongs to the IPP transferase family. As to quaternary structure, monomer. Requires Mg(2+) as cofactor.

The enzyme catalyses adenosine(37) in tRNA + dimethylallyl diphosphate = N(6)-dimethylallyladenosine(37) in tRNA + diphosphate. Catalyzes the transfer of a dimethylallyl group onto the adenine at position 37 in tRNAs that read codons beginning with uridine, leading to the formation of N6-(dimethylallyl)adenosine (i(6)A). This chain is tRNA dimethylallyltransferase, found in Exiguobacterium sibiricum (strain DSM 17290 / CCUG 55495 / CIP 109462 / JCM 13490 / 255-15).